We begin with the raw amino-acid sequence, 456 residues long: Rap guanine nucleotide exchange factor-like 1 (456 aa).

In terms of domain architecture, Ras-GEF spans 218–454 (EPEDVANHLT…FELSYKLEAN (237 aa)).

Functionally, probable guanine nucleotide exchange factor (GEF). The chain is Rap guanine nucleotide exchange factor-like 1 (RAPGEFL1) from Pongo pygmaeus (Bornean orangutan).